Consider the following 610-residue polypeptide: Zinc metalloproteinase-disintegrin-like brevilysin H6 (610 aa).

Residues 1 to 20 form the signal peptide; the sequence is MIQVLLVTICLAAFPYQGSS. The propeptide occupies 21–191; the sequence is IILESGNVND…ASQLNLTPEQ (171 aa). Position 192 is a pyrrolidone carboxylic acid (Q192). One can recognise a Peptidase M12B domain in the interval 198 to 394; that stretch reads RFVELVLVAD…HNPECIVNEP (197 aa). Ca(2+) is bound by residues E201 and D285. 4 cysteine pairs are disulfide-bonded: C309–C389, C349–C373, C351–C356, and C373–C378. H334 contacts Zn(2+). E335 is a catalytic residue. Residues H338 and H344 each contribute to the Zn(2+) site. N372 is a glycosylation site (N-linked (GlcNAc...) asparagine). Ca(2+) is bound by residues C389, N392, V404, N407, L409, E411, E414, and D417. In terms of domain architecture, Disintegrin spans 402–488; sequence PPVCGNELLE…ECPADVFHKN (87 aa). Disulfide bonds link C405–C424, C405–C434, C416–C429, C416–C434, C418–C424, C428–C451, C442–C448, C447–C473, C460–C480, C467–C492, C467–C499, C492–C504, C499–C504, C511–C526, C511–C561, C526–C572, C539–C549, C549–C556, C556–C598, C561–C572, C592–C603, and C598–C603. A D/ECD-tripeptide motif is present at residues 466–468; it reads ECD. D468, P469, E471, D483, and V484 together coordinate Ca(2+).

It belongs to the venom metalloproteinase (M12B) family. P-III subfamily. P-IIIb sub-subfamily. In terms of assembly, monomer. The cofactor is Zn(2+). Post-translationally, in the absence of calcium ions, is autocatalytically degraded giving 29 (p29K) and 45 kDa (p45K) fragments. In presence of calcium ions, the p45K is not detected. As to expression, expressed by the venom gland.

The protein resides in the secreted. Its activity is regulated as follows. Inhibited by chelating agents. Calcium ions enhance its activity, they also suppress autoproteolysis, and contribute to the stability of the enzyme against pH, heating, urea and cysteine. Shows weak hemorrhagic activity. Rapidly degrades the alpha-chain of fibrinogen (FGA). The sequence is that of Zinc metalloproteinase-disintegrin-like brevilysin H6 from Gloydius brevicauda (Korean slamosa snake).